Consider the following 91-residue polypeptide: Small ribosomal subunit protein bS18 (91 aa).

It belongs to the bacterial ribosomal protein bS18 family. As to quaternary structure, part of the 30S ribosomal subunit. Forms a tight heterodimer with protein bS6.

Its function is as follows. Binds as a heterodimer with protein bS6 to the central domain of the 16S rRNA, where it helps stabilize the platform of the 30S subunit. This Burkholderia ambifaria (strain MC40-6) protein is Small ribosomal subunit protein bS18.